Consider the following 679-residue polypeptide: Methionine--tRNA ligase (679 aa).

The short motif at 14-24 (PYANGSIHLGH) is the 'HIGH' region element. The Zn(2+) site is built by Cys-145, Cys-148, Cys-158, and Cys-161. A 'KMSKS' region motif is present at residues 331–335 (KMSKS). Lys-334 lines the ATP pocket. The tRNA-binding domain maps to 577 to 679 (AFAAVDLRIA…SGAKPGQRVK (103 aa)).

This sequence belongs to the class-I aminoacyl-tRNA synthetase family. MetG type 1 subfamily. In terms of assembly, homodimer. The cofactor is Zn(2+).

The protein resides in the cytoplasm. The enzyme catalyses tRNA(Met) + L-methionine + ATP = L-methionyl-tRNA(Met) + AMP + diphosphate. Functionally, is required not only for elongation of protein synthesis but also for the initiation of all mRNA translation through initiator tRNA(fMet) aminoacylation. The protein is Methionine--tRNA ligase of Pseudomonas paraeruginosa (strain DSM 24068 / PA7) (Pseudomonas aeruginosa (strain PA7)).